Consider the following 210-residue polypeptide: Uracil phosphoribosyltransferase (210 aa).

5-phospho-alpha-D-ribose 1-diphosphate-binding positions include R78, R103, and D130 to S138. Uracil contacts are provided by residues I193 and G198–A200. Residue D199 coordinates 5-phospho-alpha-D-ribose 1-diphosphate.

This sequence belongs to the UPRTase family. It depends on Mg(2+) as a cofactor.

The enzyme catalyses UMP + diphosphate = 5-phospho-alpha-D-ribose 1-diphosphate + uracil. It functions in the pathway pyrimidine metabolism; UMP biosynthesis via salvage pathway; UMP from uracil: step 1/1. Allosterically activated by GTP. Its function is as follows. Catalyzes the conversion of uracil and 5-phospho-alpha-D-ribose 1-diphosphate (PRPP) to UMP and diphosphate. This is Uracil phosphoribosyltransferase from Salinibacter ruber (strain DSM 13855 / M31).